Reading from the N-terminus, the 506-residue chain is Beta-glucosidase 9 (506 aa).

The first 22 residues, 1 to 22 (MKHFSLLFIFLVILLATSYSDA), serve as a signal peptide directing secretion. Residues Gln42, His139, and 184–185 (NE) contribute to the a beta-D-glucoside site. Glu185 acts as the Proton donor in catalysis. Cys204 and Cys212 form a disulfide bridge. 2 N-linked (GlcNAc...) asparagine glycosylation sites follow: Asn211 and Asn216. An a beta-D-glucoside-binding site is contributed by Tyr328. The N-linked (GlcNAc...) asparagine glycan is linked to Asn363. Glu396 serves as a coordination point for a beta-D-glucoside. Glu396 serves as the catalytic Nucleophile. A glycan (N-linked (GlcNAc...) asparagine) is linked at Asn429. Positions 439 and 455 each coordinate a beta-D-glucoside. 3 N-linked (GlcNAc...) asparagine glycosylation sites follow: Asn461, Asn483, and Asn499.

The protein belongs to the glycosyl hydrolase 1 family.

It carries out the reaction Hydrolysis of terminal, non-reducing beta-D-glucosyl residues with release of beta-D-glucose.. The chain is Beta-glucosidase 9 from Arabidopsis thaliana (Mouse-ear cress).